Reading from the N-terminus, the 449-residue chain is MNHFAVILAAGKGTRMKSKLYKVLHPVAGKPMVQHVVDQLTTLGVTRQVVIVGHGAESVKEVLGTSVEYALQSEQLGTGHAVQMAEPVLGQEKGSTLVVCGDTPLLTSETLQSLLQHHAETGAKVTVLTAHADDATGYGRIVRGEDGNVSKIVEHKDANAEELLIKEINTGTYVFDNEMLFEALKQVKNDNVQGEYYLPDVIEIAKADGETIAAYAASTFEETIGVNDRVALAQAETSMRKRTNEHWMRQGVTFIDPASTYIGPDVVIGSDTVLYPGTQLLGNTTIGSECIIGPNSDIRNSEVADQAVVRQSVVTDSKIGPAAQVGPFAHLRQQAVLGANTRIGNFVEVKKSTFGEGSKSAHLSYVGDATIGTNVNLGCGSITVNYDGTNKFQTVIEDDAFIGCNVNLIAPVTVGKNALVAAGSTVTDDVPENGLAIARERQTTKPDYR.

The pyrophosphorylase stretch occupies residues 1–229; the sequence is MNHFAVILAA…FEETIGVNDR (229 aa). Residues 8–11, lysine 22, glutamine 72, and 77–78 contribute to the UDP-N-acetyl-alpha-D-glucosamine site; these read LAAG and GT. Aspartate 102 serves as a coordination point for Mg(2+). Positions 139, 154, 169, and 227 each coordinate UDP-N-acetyl-alpha-D-glucosamine. Asparagine 227 is a binding site for Mg(2+). Residues 230–250 form a linker region; sequence VALAQAETSMRKRTNEHWMRQ. The segment at 251-449 is N-acetyltransferase; it reads GVTFIDPAST…ERQTTKPDYR (199 aa). Residues arginine 332 and lysine 350 each coordinate UDP-N-acetyl-alpha-D-glucosamine. Histidine 362 functions as the Proton acceptor in the catalytic mechanism. Positions 365 and 376 each coordinate UDP-N-acetyl-alpha-D-glucosamine. Acetyl-CoA-binding positions include 385–386, alanine 422, and arginine 439; that span reads NY.

This sequence in the N-terminal section; belongs to the N-acetylglucosamine-1-phosphate uridyltransferase family. The protein in the C-terminal section; belongs to the transferase hexapeptide repeat family. Homotrimer. Requires Mg(2+) as cofactor.

The protein localises to the cytoplasm. It carries out the reaction alpha-D-glucosamine 1-phosphate + acetyl-CoA = N-acetyl-alpha-D-glucosamine 1-phosphate + CoA + H(+). The catalysed reaction is N-acetyl-alpha-D-glucosamine 1-phosphate + UTP + H(+) = UDP-N-acetyl-alpha-D-glucosamine + diphosphate. It functions in the pathway nucleotide-sugar biosynthesis; UDP-N-acetyl-alpha-D-glucosamine biosynthesis; N-acetyl-alpha-D-glucosamine 1-phosphate from alpha-D-glucosamine 6-phosphate (route II): step 2/2. It participates in nucleotide-sugar biosynthesis; UDP-N-acetyl-alpha-D-glucosamine biosynthesis; UDP-N-acetyl-alpha-D-glucosamine from N-acetyl-alpha-D-glucosamine 1-phosphate: step 1/1. The protein operates within bacterial outer membrane biogenesis; LPS lipid A biosynthesis. Functionally, catalyzes the last two sequential reactions in the de novo biosynthetic pathway for UDP-N-acetylglucosamine (UDP-GlcNAc). The C-terminal domain catalyzes the transfer of acetyl group from acetyl coenzyme A to glucosamine-1-phosphate (GlcN-1-P) to produce N-acetylglucosamine-1-phosphate (GlcNAc-1-P), which is converted into UDP-GlcNAc by the transfer of uridine 5-monophosphate (from uridine 5-triphosphate), a reaction catalyzed by the N-terminal domain. This Exiguobacterium sibiricum (strain DSM 17290 / CCUG 55495 / CIP 109462 / JCM 13490 / 255-15) protein is Bifunctional protein GlmU.